We begin with the raw amino-acid sequence, 260 residues long: CD40 ligand (260 aa).

The Cytoplasmic segment spans residues 1–22 (MIETYSQTAPRSVATGPPVSMK). The chain crosses the membrane as a helical; Signal-anchor for type II membrane protein span at residues 23-46 (IFMYLLTVFLITQMIGSALFAVYL). Topologically, residues 47 to 260 (HRRLDKIEDE…GFTSFGLLKL (214 aa)) are extracellular. The THD domain maps to 121 to 260 (IAAHVISEAS…GFTSFGLLKL (140 aa)). A disulfide bridge links Cys177 with Cys217. An N-linked (GlcNAc...) asparagine glycan is attached at Asn239.

The protein belongs to the tumor necrosis factor family. In terms of assembly, homotrimer. Interacts with CD28. CD40 ligand, soluble form: Exists as either a monomer or a homotrimer. Forms a ternary complex between CD40 and integrins for CD40-CD40LG signaling. In terms of processing, the soluble form derives from the membrane form by proteolytic processing.

It localises to the cell membrane. The protein localises to the cell surface. Its subcellular location is the secreted. Cytokine that acts as a ligand to CD40/TNFRSF5. Costimulates T-cell proliferation and cytokine production. Its cross-linking on T-cells generates a costimulatory signal which enhances the production of IL4 and IL10 in conjunction with the TCR/CD3 ligation and CD28 costimulation. Induces the activation of NF-kappa-B. Induces the activation of kinases MAPK8 and PAK2 in T-cells. Mediates B-cell proliferation in the absence of co-stimulus as well as IgE production in the presence of IL4. Involved in immunoglobulin class switching. In terms of biological role, acts as a ligand for integrins, specifically ITGA5:ITGB1 and ITGAV:ITGB3; both integrins and the CD40 receptor are required for activation of CD40-CD40LG signaling, which have cell-type dependent effects, such as B-cell activation, NF-kappa-B signaling and anti-apoptotic signaling. This Canis lupus familiaris (Dog) protein is CD40 ligand (CD40LG).